Here is a 343-residue protein sequence, read N- to C-terminus: N-acetyl-gamma-glutamyl-phosphate reductase (343 aa).

Cysteine 147 is a catalytic residue.

It belongs to the NAGSA dehydrogenase family. Type 1 subfamily.

The protein resides in the cytoplasm. The enzyme catalyses N-acetyl-L-glutamate 5-semialdehyde + phosphate + NADP(+) = N-acetyl-L-glutamyl 5-phosphate + NADPH + H(+). It functions in the pathway amino-acid biosynthesis; L-arginine biosynthesis; N(2)-acetyl-L-ornithine from L-glutamate: step 3/4. In terms of biological role, catalyzes the NADPH-dependent reduction of N-acetyl-5-glutamyl phosphate to yield N-acetyl-L-glutamate 5-semialdehyde. In Staphylococcus aureus (strain USA300), this protein is N-acetyl-gamma-glutamyl-phosphate reductase.